A 541-amino-acid chain; its full sequence is Membrane protein insertase YidC (541 aa).

6 helical membrane passes run 7–27 (FLIV…GVTH), 289–309 (YLLT…VTLP), 356–376 (IIHS…LAFY), 430–450 (LPIL…LEMV), 463–483 (LSAQ…MFAQ), and 498–518 (IMMA…SGLV).

It belongs to the OXA1/ALB3/YidC family. Type 1 subfamily. In terms of assembly, interacts with the Sec translocase complex via SecD. Specifically interacts with transmembrane segments of nascent integral membrane proteins during membrane integration.

The protein localises to the cell inner membrane. Required for the insertion and/or proper folding and/or complex formation of integral membrane proteins into the membrane. Involved in integration of membrane proteins that insert both dependently and independently of the Sec translocase complex, as well as at least some lipoproteins. Aids folding of multispanning membrane proteins. The sequence is that of Membrane protein insertase YidC from Ruthia magnifica subsp. Calyptogena magnifica.